Here is a 508-residue protein sequence, read N- to C-terminus: Pentatricopeptide repeat-containing protein At3g04130, mitochondrial (508 aa).

The N-terminal 74 residues, M1–L74, are a transit peptide targeting the mitochondrion. 10 PPR repeats span residues S120–D150, T154–K188, N189–H219, N223–P257, C258–P292, N293–P327, D328–I363, N364–N398, D400–S434, and D436–P470.

Belongs to the PPR family. P subfamily.

It is found in the mitochondrion. The sequence is that of Pentatricopeptide repeat-containing protein At3g04130, mitochondrial from Arabidopsis thaliana (Mouse-ear cress).